The sequence spans 74 residues: MPKYYEDKPQGGACGGLKEDLGACLLESDCVVQEGKSPRQCLKEGYCNSLKYAFFECKRSVLDNRARFRGRKGY.

The 39-residue stretch at 27–65 (ESDCVVQEGKSPRQCLKEGYCNSLKYAFFECKRSVLDNR) folds into the CHCH domain. The short motif at 30–41 (CVVQEGKSPRQC) is the Cx10C motif element. Disulfide bonds link cysteine 30–cysteine 57 and cysteine 41–cysteine 47. Serine 37 carries the post-translational modification Phosphoserine. A Cx9C motif motif is present at residues 47-57 (CNSLKYAFFEC).

The protein belongs to the PET191 family.

In terms of biological role, involved in an early step of the mitochondrial complex IV assembly process. This chain is Cytochrome c oxidase assembly factor 5 (Coa5), found in Pongo abelii (Sumatran orangutan).